A 293-amino-acid chain; its full sequence is Fructokinase (293 aa).

Position 133 (threonine 133) interacts with ATP. Histidine 156, cysteine 174, histidine 177, and cysteine 180 together coordinate Zn(2+). Residues proline 188 and 236–240 each bind ATP; that span reads GVMAQ.

This sequence belongs to the ROK (NagC/XylR) family. The cofactor is Mg(2+).

The enzyme catalyses D-fructose + ATP = D-fructose 6-phosphate + ADP + H(+). With respect to regulation, inhibition by zinc ions. The protein is Fructokinase (scrK) of Streptococcus mutans serotype c (strain ATCC 700610 / UA159).